A 167-amino-acid chain; its full sequence is MEKIIEKSIYASRWLMFPVYVGLSFGFILLTLKFFQQIIFIIPDILAMSESGLVLAVLSLIDIALVGGLLVMVMFSGYENFISKMDIQDNEKRLGWMGTMDVNSIKNKVASSIVAISSVHLLRLFMEAERILDNKIMLCVIIRLTFVLSAFGMAYIDKMSKKKDNLH.

A run of 3 helical transmembrane segments spans residues 15 to 35 (LMFPVYVGLSFGFILLTLKFF), 53 to 73 (LVLAVLSLIDIALVGGLLVMV), and 136 to 156 (IMLCVIIRLTFVLSAFGMAYI).

This sequence belongs to the UPF0114 family.

The protein resides in the cell membrane. In Buchnera aphidicola subsp. Schizaphis graminum (strain Sg), this protein is UPF0114 protein in repA1-repA2 intergenic region.